The sequence spans 345 residues: Large ribosomal subunit protein uL10 (345 aa).

The interval S303–F345 is disordered. The segment covering P305 to E318 has biased composition (low complexity). Over residues A319 to P332 the composition is skewed to basic and acidic residues.

It belongs to the universal ribosomal protein uL10 family. Part of the 50S ribosomal subunit. Forms part of the ribosomal stalk which helps the ribosome interact with GTP-bound translation factors. Forms a heptameric L10(L12)2(L12)2(L12)2 complex, where L10 forms an elongated spine to which the L12 dimers bind in a sequential fashion.

Its function is as follows. Forms part of the ribosomal stalk, playing a central role in the interaction of the ribosome with GTP-bound translation factors. The chain is Large ribosomal subunit protein uL10 from Pyrobaculum aerophilum (strain ATCC 51768 / DSM 7523 / JCM 9630 / CIP 104966 / NBRC 100827 / IM2).